Consider the following 193-residue polypeptide: Ion-translocating oxidoreductase complex subunit A (193 aa).

A run of 6 helical transmembrane segments spans residues 5–25 (LMLF…FLGL), 39–59 (LGMG…AWLI), 62–82 (FILL…FIIA), 102–122 (LLGI…VALL), 134–154 (ALYG…FAAI), and 171–191 (SIAL…TGLV).

The protein belongs to the NqrDE/RnfAE family. The complex is composed of six subunits: RnfA, RnfB, RnfC, RnfD, RnfE and RnfG.

It localises to the cell inner membrane. Part of a membrane-bound complex that couples electron transfer with translocation of ions across the membrane. The polypeptide is Ion-translocating oxidoreductase complex subunit A (Sodalis glossinidius (strain morsitans)).